The primary structure comprises 247 residues: Centromere protein H (247 aa).

Met1 carries the N-acetylmethionine modification. Positions 1 to 14 (MEEQPQMQDADEPA) are enriched in acidic residues. Residues 1 to 34 (MEEQPQMQDADEPADSGGEGRAGGPPQVAGAQAA) are disordered. Position 16 is a phosphoserine (Ser16). The segment covering 24–34 (GPPQVAGAQAA) has biased composition (low complexity). Positions 47 to 192 (RAQTKQQLLE…KIDLDSMENS (146 aa)) form a coiled coil. A Glycyl lysine isopeptide (Lys-Gly) (interchain with G-Cter in SUMO2) cross-link involves residue Lys67. Position 68 is a phosphothreonine (Thr68).

This sequence belongs to the CENP-H/MCM16 family. Self-associates. Component of the CENPA-NAC complex, at least composed of CENPA, CENPC, CENPH, CENPM, CENPN, CENPT and CENPU. The CENPA-NAC complex interacts with the CENPA-CAD complex, composed of CENPI, CENPK, CENPL, CENPO, CENPP, CENPQ, CENPR and CENPS. Interacts directly with CENPK. Interacts with KIF2C and NDC80. Interacts with TRIM36.

It localises to the nucleus. Its subcellular location is the chromosome. It is found in the centromere. The protein localises to the kinetochore. In terms of biological role, component of the CENPA-NAC (nucleosome-associated) complex, a complex that plays a central role in assembly of kinetochore proteins, mitotic progression and chromosome segregation. The CENPA-NAC complex recruits the CENPA-CAD (nucleosome distal) complex and may be involved in incorporation of newly synthesized CENPA into centromeres. Required for chromosome congression and efficiently align the chromosomes on a metaphase plate. The sequence is that of Centromere protein H from Homo sapiens (Human).